The chain runs to 1024 residues: Error-prone DNA polymerase (1024 aa).

It belongs to the DNA polymerase type-C family. DnaE2 subfamily.

The protein localises to the cytoplasm. It catalyses the reaction DNA(n) + a 2'-deoxyribonucleoside 5'-triphosphate = DNA(n+1) + diphosphate. Functionally, DNA polymerase involved in damage-induced mutagenesis and translesion synthesis (TLS). It is not the major replicative DNA polymerase. In Pseudomonas paraeruginosa (strain DSM 24068 / PA7) (Pseudomonas aeruginosa (strain PA7)), this protein is Error-prone DNA polymerase.